We begin with the raw amino-acid sequence, 1376 residues long: Zinc finger MYM-type protein 2 (1376 aa).

Over residues 30-53 (NVGNSFSGPPNPLVSRSSKFQNSS) the composition is skewed to polar residues. 2 disordered regions span residues 30-56 (NVGN…SVED) and 85-158 (TSSK…FSSS). Residues lysine 48, lysine 88, lysine 98, and lysine 104 each participate in a glycyl lysine isopeptide (Lys-Gly) (interchain with G-Cter in SUMO2) cross-link. Polar residues predominate over residues 127–138 (TNQGQEKSSSNF). The span at 139–152 (IERRPSETKNRTND) shows a compositional bias: basic and acidic residues. Glycyl lysine isopeptide (Lys-Gly) (interchain with G-Cter in SUMO2) cross-links involve residues lysine 147, lysine 253, and lysine 297. The segment at 269–304 (DVFQNGESAPHHNPDSWISQSASFPRNQKQQGVDSL) is disordered. A compositionally biased stretch (polar residues) spans 284 to 302 (SWISQSASFPRNQKQQGVD). A Phosphoserine modification is found at serine 305. Residues lysine 312, lysine 324, lysine 347, and lysine 365 each participate in a glycyl lysine isopeptide (Lys-Gly) (interchain with G-Cter in SUMO2) cross-link. The MYM-type 1 zinc-finger motif lies at 326 to 362 (VKVTCANCKKPLQKGQTAYQRKGSAHLFCSTTCLSSF). An MYM-type 2 zinc finger spans residues 368–408 (PKKLCVMCKKDITTMKGTIVAQVDSSESFQEFCSTSCLSLY). Glycyl lysine isopeptide (Lys-Gly) (interchain with G-Cter in SUMO2) cross-links involve residues lysine 416, lysine 440, lysine 490, lysine 502, lysine 512, lysine 528, and lysine 531. 2 MYM-type zinc fingers span residues 420–455 (NKSR…FNRY) and 462–501 (IMNC…VTEY). An MYM-type 5 zinc finger spans residues 532–569 (LTTCTGCRTQCRFFDMTQCIGPNGYMEPYCSTACMNSH). Glycyl lysine isopeptide (Lys-Gly) (interchain with G-Cter in SUMO2) cross-links involve residues lysine 575, lysine 602, lysine 648, lysine 657, lysine 687, lysine 699, and lysine 708. The MYM-type 6 zinc finger occupies 635 to 670 (QLKCNYCKNSFCSKPEILEWENKVHQFCSKTCSDDY). MYM-type zinc fingers lie at residues 722 to 757 (RCVT…CKKF) and 763 to 798 (KAAR…LLRF). Glycyl lysine isopeptide (Lys-Gly) (interchain with G-Cter in SUMO2) cross-links involve residues lysine 763, lysine 787, lysine 811, and lysine 828. Residue serine 837 is modified to Phosphoserine. Positions 1027–1063 (VFGEEYEEQPRPRSKKKGTKRKAVSGYQSHDDSSDNS) are disordered. Residues 1038-1049 (PRSKKKGTKRKA) show a composition bias toward basic residues. Serine 1063 is modified (phosphoserine). Threonine 1375 bears the Phosphothreonine mark.

Can form homodimers. May be a component of a BHC histone deacetylase complex that contains HDAC1, HDAC2, HMG20B/BRAF35, KDM1A, RCOR1/CoREST, PHF21A/BHC80, ZMYM2, ZNF217, ZMYM3, GSE1 and GTF2I. Interacts with FOXP1 and FOXP2. Low but widespread expression is detected in the developing kidney.

The protein resides in the nucleus. Functionally, involved in the negative regulation of transcription. In Mus musculus (Mouse), this protein is Zinc finger MYM-type protein 2 (Zmym2).